Consider the following 186-residue polypeptide: uncharacterized protein (186 aa).

This is an uncharacterized protein from Acanthamoeba polyphaga (Amoeba).